Consider the following 230-residue polypeptide: Alpha-S1-casein (230 aa).

Positions 1-15 are cleaved as a signal peptide; sequence MKLLILTCLVAVALA. A phosphoserine mark is found at Ser33, Ser83, Ser85, Ser86, Ser87, and Ser88. Basic and acidic residues predominate over residues 60–83; it reads DELKDTRNEPTEDHIMEDTERKES. Disordered regions lie at residues 60–103 and 211–230; these read DELK…DILK and TPEGIASEDGGKTDVMPQWW. Over residues 84-96 the composition is skewed to low complexity; the sequence is GSSSSEEVVSSTT.

The protein belongs to the alpha-casein family. In terms of tissue distribution, mammary gland specific. Secreted in milk.

It is found in the secreted. In terms of biological role, important role in the capacity of milk to transport calcium phosphate. This Camelus dromedarius (Dromedary) protein is Alpha-S1-casein (CSN1S1).